Here is a 594-residue protein sequence, read N- to C-terminus: MAGEENFKEELRSQDASRNLNQHEVAGHPHSWSLEMLLRRLRAVHTKQDDKFANLLDAVGEFGTFQQRLVALTFIPSIMSAFFMFADHFVFTAQKPYCNTSWILAVGPHLSKAEQLNLTIPQAPNGSFLTCFMYLPVPWNLDSIIQFGLNDTDTCQDGWIYPDAKKRSLINEFDLVCGMETKKDTAQIMFMAGLPIGSLIFRLITDKMGRYPAILLSLLGLIIFGFGTAFMNSFHLYLFFRFGISQSVVGYAISSISLATEWLVGEHRAHAIILGHCFFAVGAVLLTGIAYSLPHWQLLFLVGGILVIPFISYIWILPESPRWLMMKGKVKEAKQVLCYAASVNKKTIPSNLLDELQLPRKKVTRASVLDFCKNRQLCKVTLVMSCVWFTVSYTYFTLSLRMRELGVSVHFRHVVPSIMEVPARLCCIFLLQQIGRKWSLAVTLLQAIIWCLLLLFLPEGEDGLRLKWPRCPATELKSMTILVLMLREFSLAATVTVFFLYTAELLPTVLRATGLGLVSLASVAGAILSLTIISQTPSLLPIFLCCVLAIVAFSLSSLLPETRDQPLSESLNHSSQIRNKVKDMKTKETSSDDV.

The Cytoplasmic portion of the chain corresponds to 1-70 (MAGEENFKEE…EFGTFQQRLV (70 aa)). A helical transmembrane segment spans residues 71–91 (ALTFIPSIMSAFFMFADHFVF). Over 92-184 (TAQKPYCNTS…LVCGMETKKD (93 aa)) the chain is Extracellular. Asn-99, Asn-117, Asn-125, and Asn-150 each carry an N-linked (GlcNAc...) asparagine glycan. A helical membrane pass occupies residues 185–205 (TAQIMFMAGLPIGSLIFRLIT). The Cytoplasmic portion of the chain corresponds to 206 to 210 (DKMGR). Residues 211-231 (YPAILLSLLGLIIFGFGTAFM) form a helical membrane-spanning segment. At 232–235 (NSFH) the chain is on the extracellular side. The helical transmembrane segment at 236 to 256 (LYLFFRFGISQSVVGYAISSI) threads the bilayer. The Cytoplasmic segment spans residues 257–270 (SLATEWLVGEHRAH). Residues 271–291 (AIILGHCFFAVGAVLLTGIAY) traverse the membrane as a helical segment. Residues 292 to 297 (SLPHWQ) are Extracellular-facing. Residues 298-318 (LLFLVGGILVIPFISYIWILP) traverse the membrane as a helical segment. The Cytoplasmic portion of the chain corresponds to 319–379 (ESPRWLMMKG…DFCKNRQLCK (61 aa)). The chain crosses the membrane as a helical span at residues 380 to 400 (VTLVMSCVWFTVSYTYFTLSL). Residues 401-408 (RMRELGVS) are Extracellular-facing. A helical transmembrane segment spans residues 409-431 (VHFRHVVPSIMEVPARLCCIFLL). The Cytoplasmic portion of the chain corresponds to 432-437 (QQIGRK). The helical transmembrane segment at 438–458 (WSLAVTLLQAIIWCLLLLFLP) threads the bilayer. Residues 459–488 (EGEDGLRLKWPRCPATELKSMTILVLMLRE) are Extracellular-facing. The chain crosses the membrane as a helical span at residues 489–509 (FSLAATVTVFFLYTAELLPTV). The Cytoplasmic portion of the chain corresponds to 510–512 (LRA). Residues 513–533 (TGLGLVSLASVAGAILSLTII) form a helical membrane-spanning segment. Residues 534–538 (SQTPS) lie on the Extracellular side of the membrane. Residues 539–559 (LLPIFLCCVLAIVAFSLSSLL) traverse the membrane as a helical segment. Over 560–594 (PETRDQPLSESLNHSSQIRNKVKDMKTKETSSDDV) the chain is Cytoplasmic. The interval 566–594 (PLSESLNHSSQIRNKVKDMKTKETSSDDV) is disordered. The span at 567-578 (LSESLNHSSQIR) shows a compositional bias: polar residues. The segment covering 580 to 594 (KVKDMKTKETSSDDV) has biased composition (basic and acidic residues).

Belongs to the major facilitator (TC 2.A.1) superfamily. Organic cation transporter (TC 2.A.1.19) family. In terms of tissue distribution, ubiquitous.

The protein resides in the mitochondrion inner membrane. The protein localises to the cell projection. It is found in the cilium. It localises to the flagellum membrane. It catalyses the reaction riboflavin(in) = riboflavin(out). Functionally, riboflavin transporter localized at the inner mitochondrial membrane of the spermatozoa midpiece, which is required for male fertility. SLC22A14-mediated riboflavin transport is essential for spermatozoa energy generation and motility: riboflavin is the precursor of FMN and FAD, which are coenzymes of many enzymes in the TCA cycle (the citric acid cycle) in mitochondria. Required for sperm motility and normal sperm flagellar structure. This is Solute carrier family 22 member 14 from Homo sapiens (Human).